Consider the following 396-residue polypeptide: Mannonate dehydratase (396 aa).

It belongs to the mannonate dehydratase family. Fe(2+) serves as cofactor. It depends on Mn(2+) as a cofactor.

The catalysed reaction is D-mannonate = 2-dehydro-3-deoxy-D-gluconate + H2O. It functions in the pathway carbohydrate metabolism; pentose and glucuronate interconversion. In terms of biological role, catalyzes the dehydration of D-mannonate. The chain is Mannonate dehydratase from Yersinia enterocolitica serotype O:8 / biotype 1B (strain NCTC 13174 / 8081).